Consider the following 302-residue polypeptide: Nucleotide-binding protein Bcenmc03_2806 (302 aa).

8–15 (GISGSGKS) contributes to the ATP binding site. 57 to 60 (DARS) is a GTP binding site.

This sequence belongs to the RapZ-like family.

Functionally, displays ATPase and GTPase activities. This Burkholderia orbicola (strain MC0-3) protein is Nucleotide-binding protein Bcenmc03_2806.